The primary structure comprises 150 residues: UPF0208 membrane protein VP2081 (150 aa).

A run of 2 helical transmembrane segments spans residues phenylalanine 42–asparagine 62 and serine 70–alanine 90.

It belongs to the UPF0208 family.

The protein localises to the cell inner membrane. This chain is UPF0208 membrane protein VP2081, found in Vibrio parahaemolyticus serotype O3:K6 (strain RIMD 2210633).